The primary structure comprises 498 residues: ATP synthase subunit beta, chloroplastic (498 aa).

Residue 172–179 (GGAGVGKT) participates in ATP binding.

This sequence belongs to the ATPase alpha/beta chains family. F-type ATPases have 2 components, CF(1) - the catalytic core - and CF(0) - the membrane proton channel. CF(1) has five subunits: alpha(3), beta(3), gamma(1), delta(1), epsilon(1). CF(0) has four main subunits: a(1), b(1), b'(1) and c(9-12).

The protein localises to the plastid. The protein resides in the chloroplast thylakoid membrane. The catalysed reaction is ATP + H2O + 4 H(+)(in) = ADP + phosphate + 5 H(+)(out). Functionally, produces ATP from ADP in the presence of a proton gradient across the membrane. The catalytic sites are hosted primarily by the beta subunits. This chain is ATP synthase subunit beta, chloroplastic, found in Brasenia schreberi (Water shield).